A 172-amino-acid chain; its full sequence is MSDEITNGAAKPTEAISGPTFTIEKIYIKDVSFEAPNSPAVFNEAGQPELQLNLNQRVQRLNENAFELVLHVTLTCTAAGKTAYVVEVQQAGVFGLFGLDQHAIGVLLGTQCPNILFPYVRSLVSDLIQIGGFPPFYLQPINFDALYAETLRQRAQNEKEGSQISSHPAGNA.

This sequence belongs to the SecB family. In terms of assembly, homotetramer, a dimer of dimers. One homotetramer interacts with 1 SecA dimer.

The protein resides in the cytoplasm. Its function is as follows. One of the proteins required for the normal export of preproteins out of the cell cytoplasm. It is a molecular chaperone that binds to a subset of precursor proteins, maintaining them in a translocation-competent state. It also specifically binds to its receptor SecA. The polypeptide is Protein-export protein SecB (Xylella fastidiosa (strain 9a5c)).